Here is a 420-residue protein sequence, read N- to C-terminus: Putative zinc metalloprotease Lmo1318 (420 aa).

A Zn(2+)-binding site is contributed by His18. Residue Glu19 is part of the active site. Zn(2+) is bound at residue His22. The next 4 helical transmembrane spans lie at 172 to 194 (TIFA…LAFV), 304 to 326 (NWIV…LDML), 347 to 369 (VLNW…LPAL), and 393 to 412 (GIIH…LVTW). The region spanning 176 to 267 (GPLFNFILAI…DGKTQDIDVK (92 aa)) is the PDZ domain.

The protein belongs to the peptidase M50B family. The cofactor is Zn(2+).

The protein resides in the cell membrane. The sequence is that of Putative zinc metalloprotease Lmo1318 from Listeria monocytogenes serovar 1/2a (strain ATCC BAA-679 / EGD-e).